Here is a 571-residue protein sequence, read N- to C-terminus: Wee1-like protein kinase 1-A (571 aa).

The interval 1 to 101 (MSLQPVPHRL…PDCPGTPPHK (101 aa)) is disordered. Over residues 81–98 (PASPPGPAASPPDCPGTP) the composition is skewed to pro residues. Positions 224–494 (FHELEKIGSG…SMALVKHSVL (271 aa)) constitute a Protein kinase domain. ATP is bound by residues 230–238 (IGSGEFGSV) and lysine 253. Residue aspartate 351 is the Proton acceptor of the active site. Mg(2+) contacts are provided by asparagine 356 and aspartate 388. Residues 500–539 (KNAEQLRIELNAEKFKNALLQKELKKAQIAKAAAEERALF) adopt a coiled-coil conformation.

It belongs to the protein kinase superfamily. Ser/Thr protein kinase family. WEE1 subfamily. As to expression, zygotically expressed. Expressed in regions of the embryo that are devoid of mitotic cells, such as the involuting mesoderm.

It localises to the nucleus. The catalysed reaction is L-tyrosyl-[protein] + ATP = O-phospho-L-tyrosyl-[protein] + ADP + H(+). Acts as a zygotic negative regulator of entry into mitosis (G2 to M transition) by protecting the nucleus from cytoplasmically activated cyclin B1-complexed cdk1 before the onset of mitosis by mediating phosphorylation of cdk1 on 'Tyr-15'. Specifically phosphorylates and inactivates cyclin B1-complexed cdk1 reaching a maximum during G2 phase and a minimum as cells enter M phase. Phosphorylation of cyclin B1-cdk1 occurs exclusively on 'Tyr-15' and phosphorylation of monomeric cdk1 does not occur. Involved in convergent extension of the paraxial mesoderm during neurulation by inhibiting the cell cycle. This is Wee1-like protein kinase 1-A (wee1-a) from Xenopus laevis (African clawed frog).